Reading from the N-terminus, the 512-residue chain is Sporulation-regulated protein 3 (512 aa).

Residues 31 to 68 are disordered; it reads RQSSQGQYAVDSHPPKSPELKHRRQRSSSFVNGKCRNR. In terms of domain architecture, Septin-type G spans 106 to 365; it reads NGIDFTLMVA…EKCRSEMLRT (260 aa). Residues 116 to 123 form a G1 motif region; sequence GQSGLGKT. GTP-binding positions include 116-123, glycine 168, 247-255, and arginine 315; these read GQSGLGKT and KSDLLTKEE. A G3 motif region spans residues 165-168; that stretch reads DTPG. Positions 246–249 are G4 motif; that stretch reads AKSD. Coiled coils occupy residues 376–406 and 451–496; these read TKSV…LKNY and RDWK…KSSN.

This sequence belongs to the TRAFAC class TrmE-Era-EngA-EngB-Septin-like GTPase superfamily. Septin GTPase family. Interacts with other septin proteins such as SPR28 to form a ring at the bud neck.

It is found in the prospore membrane. Its subcellular location is the bud neck. Its function is as follows. Septins are GTPases involved in cytokinesis that assemble into filaments and form a ring at the cleavage site. May act by recruiting MYO1 and HOF1, a protein involved in septation, to the site of cleavage. Septins are also involved in cell morphogenesis, bud site selection, chitin deposition, cell cycle regulation, cell compartmentalization and spore wall formation. This chain is Sporulation-regulated protein 3 (SPR3), found in Saccharomyces cerevisiae (strain ATCC 204508 / S288c) (Baker's yeast).